The sequence spans 612 residues: MIQVLLVTICLAVFPYQGSSIILGSGNVNDYEVVYPRKVTALPKGAAQPKYEDTMQYEFKVNGEPVVLHLEKNKGLFSEDYSETHYSPDGREITTYPPVEDHCYYHGRIQNDADSTASISACNGLKGHFKLQGEMYLIEPLELSDSEAHAVFKYENVEKEDEAPKMCGVTQNWESYEPIKKASQLNLTPEQQRYLNTKKYIELVIVADNVMVKKYTSNSTAIRTRIYACVNTLNLIYRAFNIHIALVGIEIWSNKDLINVISASNVTLDLFGNWRRRVLLRRKRHDNAQLLTAIDLDGPTIGLARVGSMCDPKCSTGIVQDHSKLDVMVAVTMAHELAHNLGINHDGNQCNCGGNPCIMSATLNFEPAYRFSDCSRDEHWRYLIDNRPPCILNKPLITDIVSPPVCGNYFVEVGEECDCGLPAHCQNPCCNAATCKLRPGTQCEDGECCEQCQFTSAGTECRAAKSECDIAESCTGQSADCPTDNFQRNGRPCLNNNGYCYNGKCPTLDHQCISFFGSSATVAPDVCFNLNLKGEGNFYCRRENTRIFPCAPQDKKCGRLFCVLGPTGNTISCQATSSQSNVDIGMVDLGTKCGDGRVCNSNRQCVDVNTAY.

A signal peptide spans 1 to 20 (MIQVLLVTICLAVFPYQGSS). Residues 21–189 (IILGSGNVND…KKASQLNLTP (169 aa)) constitute a propeptide that is removed on maturation. Residues 199-395 (KYIELVIVAD…NRPPCILNKP (197 aa)) enclose the Peptidase M12B domain. Glu-202 provides a ligand contact to Ca(2+). Asn-218 is a glycosylation site (N-linked (GlcNAc...) asparagine). Position 286 (Asp-286) interacts with Ca(2+). 3 cysteine pairs are disulfide-bonded: Cys-310–Cys-390, Cys-350–Cys-374, and Cys-352–Cys-357. Residue His-335 coordinates Zn(2+). The active site involves Glu-336. Zn(2+) contacts are provided by His-339 and His-345. Ca(2+) contacts are provided by Cys-390, Asn-393, Val-405, Asn-408, Phe-410, Glu-412, Glu-415, and Asp-418. A Disintegrin domain is found at 403–489 (PPVCGNYFVE…DCPTDNFQRN (87 aa)). Disulfide bonds link Cys-406–Cys-435, Cys-417–Cys-430, Cys-419–Cys-425, Cys-429–Cys-452, Cys-443–Cys-449, Cys-448–Cys-474, Cys-461–Cys-481, Cys-468–Cys-500, Cys-493–Cys-505, Cys-512–Cys-562, Cys-527–Cys-573, Cys-540–Cys-550, Cys-557–Cys-599, and Cys-593–Cys-605. The D/ECD-tripeptide motif lies at 467–469 (ECD).

This sequence belongs to the venom metalloproteinase (M12B) family. P-III subfamily. Zn(2+) serves as cofactor. Expressed by the venom gland.

It is found in the secreted. Its function is as follows. Snake venom metalloproteinase that impairs hemostasis in the envenomed animal. The sequence is that of Zinc metalloproteinase-disintegrin-like 2d from Crotalus adamanteus (Eastern diamondback rattlesnake).